We begin with the raw amino-acid sequence, 617 residues long: Solute carrier family 2, facilitated glucose transporter member 12 (617 aa).

Residues 1–29 (MVPVENTEGPSLLNQKGTAVETEGSGSRH) are disordered. At 1–44 (MVPVENTEGPSLLNQKGTAVETEGSGSRHPPWARGCGMFTFLSS) the chain is on the cytoplasmic side. Over residues 8–17 (EGPSLLNQKG) the composition is skewed to polar residues. The chain crosses the membrane as a helical span at residues 45–65 (VTAAVSGLLVGYELGIISGAL). Over 66–80 (LQIKTLLALSCHEQE) the chain is Extracellular. The chain crosses the membrane as a helical span at residues 81 to 101 (MVVSSLVIGALLASLTGGVLI). The Cytoplasmic segment spans residues 102–115 (DRYGRRTAIILSSC). Residues 116-136 (LLGLGSLVLILSLSYTVLIVG) form a helical membrane-spanning segment. Arg137 is a topological domain (extracellular). A helical membrane pass occupies residues 138–158 (IAIGVSISLSSIATCVYIAEI). Residues 159 to 172 (APQHRRGLLVSLNE) lie on the Cytoplasmic side of the membrane. The helical transmembrane segment at 173–193 (LMIVIGILSAYISNYAFANVF) threads the bilayer. Over 194–197 (HGWK) the chain is Extracellular. The chain crosses the membrane as a helical span at residues 198–218 (YMFGLVIPLGVLQAIAMYFLP). Residues 219–278 (PSPRFLVMKGQEGAASKVLGRLRALSDTTEELTVIKSSLKDEYQYSFWDLFRSKDNMRTR) lie on the Cytoplasmic side of the membrane. A helical membrane pass occupies residues 279-299 (IMIGLTLVFFVQITGQPNILF). At 300-317 (YASTVLKSVGFQSNEAAS) the chain is on the extracellular side. The helical transmembrane segment at 318–338 (LASTGVGVVKVISTIPATLLV) threads the bilayer. The Cytoplasmic segment spans residues 339–345 (DHVGSKT). Residues 346 to 366 (FLCIGSSVMAASLVTMGIVNL) form a helical membrane-spanning segment. At 367–466 (NIHMNFTHIC…PAFLKWLSLA (100 aa)) the chain is on the extracellular side. Residues Asn371, Asn383, Asn396, and Asn401 are each glycosylated (N-linked (GlcNAc...) asparagine). A helical membrane pass occupies residues 467–487 (SLLVYVAAFSIGLGPMPWLVL). At 488–498 (SEIFPGGIRGR) the chain is on the cytoplasmic side. Residues 499–519 (AMALTSSMNWGINLLISLTFL) form a helical membrane-spanning segment. Residues 520–528 (TVTDLIGLP) lie on the Extracellular side of the membrane. A helical membrane pass occupies residues 529–549 (WVCFIYTIMSLASLLFVVMFI). Topologically, residues 550-617 (PETKGCSLEQ…GQSRQLSPET (68 aa)) are cytoplasmic.

This sequence belongs to the major facilitator superfamily. Sugar transporter (TC 2.A.1.1) family. Glucose transporter subfamily. As to expression, predominantly expressed in skeletal muscle, heart and prostate, with lower levels in brain, placenta and kidney.

The protein resides in the cell membrane. The protein localises to the endomembrane system. It localises to the cytoplasm. Its subcellular location is the perinuclear region. It catalyses the reaction D-glucose(out) = D-glucose(in). Functionally, insulin-independent facilitative glucose transporter. In Homo sapiens (Human), this protein is Solute carrier family 2, facilitated glucose transporter member 12.